Consider the following 208-residue polypeptide: Ras-related protein Rab-6A (208 aa).

Serine 2 is subject to N-acetylserine. GTP contacts are provided by serine 23, valine 24, glycine 25, lysine 26, threonine 27, serine 28, aspartate 39, asparagine 40, tyrosine 42, and threonine 45. Threonine 27 is a Mg(2+) binding site. A Switch 1 motif is present at residues 32–50; sequence RFMYDSFDNTYQATIGIDF. Residues threonine 45 and aspartate 68 each coordinate Mg(2+). The Switch 2 motif lies at 69-88; the sequence is TAGQERFRSLIPSYIRDSAA. GTP contacts are provided by glycine 71, asparagine 126, lysine 127, aspartate 129, serine 156, alanine 157, and lysine 158. Residues cysteine 206 and cysteine 208 are each lipidated (S-geranylgeranyl cysteine). Cysteine 208 carries the cysteine methyl ester modification.

This sequence belongs to the small GTPase superfamily. Rab family. Mg(2+) is required as a cofactor.

Its subcellular location is the golgi apparatus membrane. It carries out the reaction GTP + H2O = GDP + phosphate + H(+). With respect to regulation, regulated by guanine nucleotide exchange factors (GEFs) which promote the exchange of bound GDP for free GTP. Regulated by GTPase activating proteins (GAPs) which increase the GTP hydrolysis activity. Inhibited by GDP dissociation inhibitors (GDIs). Its function is as follows. The small GTPases Rab are key regulators of intracellular membrane trafficking, from the formation of transport vesicles to their fusion with membranes. Rabs cycle between an inactive GDP-bound form and an active GTP-bound form that is able to recruit to membranes different sets of downstream effectors directly responsible for vesicle formation, movement, tethering and fusion. RAB6A acts as a regulator of COPI-independent retrograde transport from the Golgi apparatus towards the endoplasmic reticulum (ER). This is Ras-related protein Rab-6A (RAB6A) from Gallus gallus (Chicken).